The sequence spans 122 residues: Bet1-like SNARE 1-1 (122 aa).

Over 1 to 103 the chain is Cytoplasmic; sequence MNPRREPRGG…VFETKSSRRM (103 aa). The t-SNARE coiled-coil homology domain occupies 32 to 94; it reads EINEHENERA…SGTMDRFKTV (63 aa). Serine 56 is subject to Phosphoserine. A helical; Anchor for type IV membrane protein membrane pass occupies residues 104–121; the sequence is LTLVASFVGLFLVIYYLT. Residue arginine 122 is a topological domain, vesicular.

It belongs to the BET1 family.

It is found in the golgi apparatus membrane. It localises to the endoplasmic reticulum membrane. Its function is as follows. Required for vesicular transport from the ER to the Golgi complex. Functions as a SNARE associated with ER-derived vesicles. This is Bet1-like SNARE 1-1 (BET11) from Arabidopsis thaliana (Mouse-ear cress).